Reading from the N-terminus, the 327-residue chain is Methionine import ATP-binding protein MetN (327 aa).

Residues 3-239 (VELKNIEKIY…PKHAVTKELL (237 aa)) enclose the ABC transporter domain. 36-43 (GYSGAGKS) provides a ligand contact to ATP.

It belongs to the ABC transporter superfamily. Methionine importer (TC 3.A.1.24) family. In terms of assembly, the complex is composed of two ATP-binding proteins (MetN), two transmembrane proteins (MetI) and a solute-binding protein (MetQ).

It is found in the cell inner membrane. It catalyses the reaction L-methionine(out) + ATP + H2O = L-methionine(in) + ADP + phosphate + H(+). It carries out the reaction D-methionine(out) + ATP + H2O = D-methionine(in) + ADP + phosphate + H(+). In terms of biological role, part of the ABC transporter complex MetNIQ involved in methionine import. Responsible for energy coupling to the transport system. The polypeptide is Methionine import ATP-binding protein MetN (Helicobacter pylori (strain J99 / ATCC 700824) (Campylobacter pylori J99)).